Consider the following 22-residue polypeptide: thr operon leader peptide (22 aa).

A disordered region spans residues 1–22; sequence MRNISLTTTIITTTDTTGNGAG. The segment covering 7-22 has biased composition (low complexity); that stretch reads TTTIITTTDTTGNGAG.

The protein belongs to the thr operon leader peptide family.

This protein is involved in control of the biosynthesis of threonine. This chain is thr operon leader peptide, found in Serratia marcescens.